The sequence spans 109 residues: Flowering-promoting factor 1-like protein 1 (109 aa).

A D-box motif is present at residues 73 to 81; that stretch reads RGSLDLISL.

It belongs to the FPF1 family. In terms of assembly, interacts with RPT4. In terms of processing, ubiquitinated. RPT4 mediates its proteasome-dependent degradation. Specifically expressed in the apical meristem, the elongation zone of root tip, steles of the branch zone, and the young lateral root. Also expressed in spikes. Expressed in roots and spikes (at protein level).

It is found in the cytoplasm. The protein resides in the nucleus. Functionally, GTP-binding protein that functions in the development of root systems, which are mediated by auxin. Acts as a cell cycle regulator during root development. Proteasome-mediated degradation of the protein is necessary for the transition of metaphase to anaphase in mitosis. This is Flowering-promoting factor 1-like protein 1 (RAA1) from Oryza sativa subsp. japonica (Rice).